The chain runs to 473 residues: Aspartyl/glutamyl-tRNA(Asn/Gln) amidotransferase subunit B (473 aa).

It belongs to the GatB/GatE family. GatB subfamily. Heterotrimer of A, B and C subunits.

The enzyme catalyses L-glutamyl-tRNA(Gln) + L-glutamine + ATP + H2O = L-glutaminyl-tRNA(Gln) + L-glutamate + ADP + phosphate + H(+). It catalyses the reaction L-aspartyl-tRNA(Asn) + L-glutamine + ATP + H2O = L-asparaginyl-tRNA(Asn) + L-glutamate + ADP + phosphate + 2 H(+). Functionally, allows the formation of correctly charged Asn-tRNA(Asn) or Gln-tRNA(Gln) through the transamidation of misacylated Asp-tRNA(Asn) or Glu-tRNA(Gln) in organisms which lack either or both of asparaginyl-tRNA or glutaminyl-tRNA synthetases. The reaction takes place in the presence of glutamine and ATP through an activated phospho-Asp-tRNA(Asn) or phospho-Glu-tRNA(Gln). This Finegoldia magna (strain ATCC 29328 / DSM 20472 / WAL 2508) (Peptostreptococcus magnus) protein is Aspartyl/glutamyl-tRNA(Asn/Gln) amidotransferase subunit B.